A 465-amino-acid polypeptide reads, in one-letter code: Argininosuccinate lyase (465 aa).

The protein belongs to the lyase 1 family. Argininosuccinate lyase subfamily.

Its subcellular location is the cytoplasm. It catalyses the reaction 2-(N(omega)-L-arginino)succinate = fumarate + L-arginine. It participates in amino-acid biosynthesis; L-arginine biosynthesis; L-arginine from L-ornithine and carbamoyl phosphate: step 3/3. The chain is Argininosuccinate lyase from Desulfatibacillum aliphaticivorans.